A 485-amino-acid chain; its full sequence is ATP synthase subunit beta (485 aa).

The segment covering 1-11 (MPATETADKNT) has biased composition (basic and acidic residues). The tract at residues 1 to 20 (MPATETADKNTKSANSDTSG) is disordered. Position 170 to 177 (170 to 177 (GGAGVGKT)) interacts with ATP.

It belongs to the ATPase alpha/beta chains family. In terms of assembly, F-type ATPases have 2 components, CF(1) - the catalytic core - and CF(0) - the membrane proton channel. CF(1) has five subunits: alpha(3), beta(3), gamma(1), delta(1), epsilon(1). CF(0) has three main subunits: a(1), b(2) and c(9-12). The alpha and beta chains form an alternating ring which encloses part of the gamma chain. CF(1) is attached to CF(0) by a central stalk formed by the gamma and epsilon chains, while a peripheral stalk is formed by the delta and b chains.

The protein localises to the cell membrane. The enzyme catalyses ATP + H2O + 4 H(+)(in) = ADP + phosphate + 5 H(+)(out). Functionally, produces ATP from ADP in the presence of a proton gradient across the membrane. The catalytic sites are hosted primarily by the beta subunits. The chain is ATP synthase subunit beta from Mycolicibacterium paratuberculosis (strain ATCC BAA-968 / K-10) (Mycobacterium paratuberculosis).